The sequence spans 413 residues: MNLASVLLLLAACHLSVSVNGQEHKEAIELSMANHDHVLGSAQVVFVAFCADWCPFSRRLKPIFEESARVFHQENPQASAVWAIVDSQRQADIGDKYFVNKYPTMKVFVNGELITKEYRSTRSVEALTNFVKFQLSTAINEFSSQDQLNQEMDKSKRNVVAWLKKDGPEFANLKKVASILREDCSFWVPTDHFGTQTNDNKLSFFDPDSNEEAKFTGNFNDYDFVKQWVTDKCIPLVREVTFENVEELTEEGMPFLIYFRDPDNKTTDKVFGEAVARELYDQRSAINPLLADGHKFAHPLKHLGKTKEDLPVLAIDSFQHMYLFPDMTQMNIPGKLREFVMDLHSGKLHKDFHENLDQRMIELAKAKAARGITDDHEAQAPSTRPIDTTPPPSVFKELKPSDKRYSILQKSEL.

Residues 1-21 (MNLASVLLLLAACHLSVSVNG) form the signal peptide. In terms of domain architecture, Thioredoxin spans 22-136 (QEHKEAIELS…LTNFVKFQLS (115 aa)). A disulfide bridge links C184 with C233. An N-linked (GlcNAc...) asparagine glycan is attached at N264. Residues 367–413 (KAARGITDDHEAQAPSTRPIDTTPPPSVFKELKPSDKRYSILQKSEL) are disordered. Positions 396–413 (KELKPSDKRYSILQKSEL) are enriched in basic and acidic residues. The short motif at 410–413 (KSEL) is the Prevents secretion from ER element.

The protein localises to the endoplasmic reticulum lumen. This chain is Endoplasmic reticulum resident protein 44.2, found in Caenorhabditis elegans.